Reading from the N-terminus, the 314-residue chain is Methionyl-tRNA formyltransferase (314 aa).

113–116 (SLLP) lines the (6S)-5,6,7,8-tetrahydrofolate pocket.

It belongs to the Fmt family.

It carries out the reaction L-methionyl-tRNA(fMet) + (6R)-10-formyltetrahydrofolate = N-formyl-L-methionyl-tRNA(fMet) + (6S)-5,6,7,8-tetrahydrofolate + H(+). Functionally, attaches a formyl group to the free amino group of methionyl-tRNA(fMet). The formyl group appears to play a dual role in the initiator identity of N-formylmethionyl-tRNA by promoting its recognition by IF2 and preventing the misappropriation of this tRNA by the elongation apparatus. This chain is Methionyl-tRNA formyltransferase, found in Pseudomonas aeruginosa (strain LESB58).